The sequence spans 370 residues: Cytochrome b (370 aa).

Helical transmembrane passes span 25–45 (FGSMLLACLTLQLLTGFFLAV), 69–90 (WMMQNLHAIGASMFFICIYIHI), 105–125 (WLSGTTLLIMLMATAFFGYVL), and 170–190 (FFALHFILPFGIISLSSLHIL). Heme b contacts are provided by His-75 and His-89. Residues His-174 and His-188 each coordinate heme b. A ubiquinone is bound at residue His-193. 4 helical membrane-spanning segments follow: residues 218–238 (YKDMLMLTIMTIMLLTIVSFF), 280–300 (LGGALALTMSIMMLLTLPFTH), 312–332 (LMQLTFWTFTATFLVISWTAT), and 339–358 (FTTISQVAALMYFLFFISNP).

It belongs to the cytochrome b family. As to quaternary structure, the cytochrome bc1 complex contains 3 respiratory subunits (MT-CYB, CYC1 and UQCRFS1), 2 core proteins (UQCRC1 and UQCRC2) and probably 6 low-molecular weight proteins. The cofactor is heme b.

The protein resides in the mitochondrion inner membrane. Its function is as follows. Component of the ubiquinol-cytochrome c reductase complex (complex III or cytochrome b-c1 complex) that is part of the mitochondrial respiratory chain. The b-c1 complex mediates electron transfer from ubiquinol to cytochrome c. Contributes to the generation of a proton gradient across the mitochondrial membrane that is then used for ATP synthesis. The chain is Cytochrome b (MT-CYB) from Chilabothrus strigilatus strigilatus (New Providence boa constrictor).